Consider the following 232-residue polypeptide: Lipoprotein-releasing system ATP-binding protein LolD (232 aa).

The ABC transporter domain maps to 11–232 (IEVTDLQRAF…LHDGRLIEEY (222 aa)). 47–54 (GPSGAGKS) lines the ATP pocket.

The protein belongs to the ABC transporter superfamily. Lipoprotein translocase (TC 3.A.1.125) family. As to quaternary structure, the complex is composed of two ATP-binding proteins (LolD) and two transmembrane proteins (LolC and LolE).

The protein resides in the cell inner membrane. In terms of biological role, part of the ABC transporter complex LolCDE involved in the translocation of mature outer membrane-directed lipoproteins, from the inner membrane to the periplasmic chaperone, LolA. Responsible for the formation of the LolA-lipoprotein complex in an ATP-dependent manner. This Zymomonas mobilis subsp. mobilis (strain ATCC 31821 / ZM4 / CP4) protein is Lipoprotein-releasing system ATP-binding protein LolD.